A 359-amino-acid polypeptide reads, in one-letter code: Prostaglandin F2-alpha receptor (359 aa).

The Extracellular segment spans residues 1–31 (MSMNNSKQLVSPAAALLSNTTCQTENRLSVF). N-linked (GlcNAc...) asparagine glycosylation is found at Asn-4 and Asn-19. The helical transmembrane segment at 32-54 (FSVIFMTVGILSNSLAIAILMKA) threads the bilayer. The Cytoplasmic portion of the chain corresponds to 55–69 (YQRFRQKSKASFLLL). The helical transmembrane segment at 70-90 (ASGLVITDFFGHLINGAIAVF) threads the bilayer. Residues 91–109 (VYASDKEWIRFDQSNVLCS) are Extracellular-facing. An intrachain disulfide couples Cys-108 to Cys-186. The helical transmembrane segment at 110-131 (IFGICMVFSGLCPLLLGSVMAI) threads the bilayer. At 132–152 (ERCIGVTKPIFHSTKITSKHV) the chain is on the cytoplasmic side. Residues 153 to 175 (KMMLSGVCLFAVFIALLPILGHR) traverse the membrane as a helical segment. Topologically, residues 176–198 (DYKIQASRTWCFYNTEDIKDWED) are extracellular. A helical membrane pass occupies residues 199–224 (RFYLLLFSFLGLLALGVSLLCNAITG). Over 225–250 (ITLLRVKFKSQQHRQGRSHHLEMVIQ) the chain is Cytoplasmic. Residues 251–267 (LLAIMCVSCICWSPFLV) form a helical membrane-spanning segment. At 268-285 (TMANIGINGNHSLETCET) the chain is on the extracellular side. The helical transmembrane segment at 286–307 (TLFALRMATWNQILDPWVYILL) threads the bilayer. The Cytoplasmic segment spans residues 308–359 (RKAVLKNLYKLASQCCGVHVISLHIWELSSIKNSLKVAAISESPVAEKSAST).

This sequence belongs to the G-protein coupled receptor 1 family. In terms of assembly, isoform 1 can form heterodimers with isoform 5 (and probably other isoforms). In terms of tissue distribution, eye.

Its subcellular location is the cell membrane. In terms of biological role, receptor for prostaglandin F2-alpha (PGF2-alpha). The activity of this receptor is mediated by G proteins which activate a phosphatidylinositol-calcium second messenger system. Initiates luteolysis in the corpus luteum. Isoforms 2 to 7 do not bind PGF2-alpha but are proposed to modulate signaling by participating in variant receptor complexes; heterodimers between isoform 1 and isoform 5 are proposed to be a receptor for prostamides including the synthetic analog bimatoprost. The protein is Prostaglandin F2-alpha receptor (PTGFR) of Homo sapiens (Human).